A 2090-amino-acid polypeptide reads, in one-letter code: Nuclear pore complex protein Nup214 (2090 aa).

At glycine 2 the chain carries N-acetylglycine. Residue serine 30 is modified to Phosphoserine. 7 Blade repeats span residues 41-93 (LLAV…PMKF), 94-150 (PIHH…DAGG), 151-193 (MVID…PSTV), 194-239 (AVTS…ESDH), 240-303 (PVRV…ERQH), 304-359 (HYYL…KSDD), and 360-404 (SLPM…FYMI). The seven-bladed beta propeller stretch occupies residues 41–404 (LLAVSNKYGL…DGVLCPFYMI (364 aa)). The 44 X 2 AA repeats of F-G stretch occupies residues 236–1418 (ESDHPVRVLD…AVFGSLPVTS (1183 aa)). The residue at position 416 (threonine 416) is a Phosphothreonine. Serine 421, serine 430, and serine 433 each carry phosphoserine. Residues 422-460 (LEGERQPKSPGSTPTTPTSSQAPQKLDASAAAAPASLPP) are disordered. A compositionally biased stretch (low complexity) spans 429–441 (KSPGSTPTTPTSS). Threonine 434, threonine 437, and threonine 439 each carry phosphothreonine. Residues 450–586 (SAAAAPASLP…PPSTSAVKVN (137 aa)) form a (Microbial infection) Binds human adenovirus 5 (HAdV-5) protein L3 (hexon) region. The 11 X 5 AA approximate repeats stretch occupies residues 481 to 2076 (VFSFGSSSLK…GSGTGGFSFG (1596 aa)). Repeat unit 1 spans residues 484-485 (FG). 2 stretches are compositionally biased toward low complexity: residues 489–513 (LKSS…KAAP) and 524–536 (PPSK…TPAA). The segment at 489-536 (LKSSATVTGEPPSYSSGSDSSKAAPGPGPSTFSFVPPSKASLAPTPAA) is disordered. Repeat 2 spans residues 548–549 (FG). Composition is skewed to low complexity over residues 597–629 (STPV…HPTP) and 637–658 (VPLK…SSSP). Positions 597–700 (STPVSSSQSA…KQGHQWKDSD (104 aa)) are disordered. Phosphoserine is present on residues serine 651, serine 657, and serine 666. Position 670 is a phosphothreonine (threonine 670). Serine 678 is subject to Phosphoserine. The stretch at 680–1209 (QAKSLQPAVA…VTSTPSASGQ (530 aa)) forms a coiled coil. The span at 691–700 (KQGHQWKDSD) shows a compositional bias: basic and acidic residues. 2 leucine-zipper regions span residues 740–768 (LRTE…ISSL) and 861–882 (LANN…VDSL). Serine 760 carries the phosphoserine modification. 4 positions are modified to phosphoserine: serine 940, serine 970, serine 974, and serine 989. The tract at residues 987 to 1009 (TSSVSQSLESEDARTSCKDDEAV) is disordered. Over residues 997 to 1007 (EDARTSCKDDE) the composition is skewed to basic and acidic residues. Threonine 1021 is modified (phosphothreonine). A phosphoserine mark is found at serine 1023, serine 1045, serine 1056, and serine 1081. A compositionally biased stretch (polar residues) spans 1128-1149 (LKNNPATPSTAMGSSVPYSTAK). A disordered region spans residues 1128 to 1152 (LKNNPATPSTAMGSSVPYSTAKTPH). A phosphothreonine mark is found at threonine 1134, threonine 1150, and threonine 1156. 2 stretches are compositionally biased toward polar residues: residues 1168–1188 (LINS…SSGD) and 1199–1213 (AVTS…FSKP). The segment at 1168-1213 (LINSLKPSGPTPASGQLSSGDKASGTAKIETAVTSTPSASGQFSKP) is disordered. A Phosphoserine modification is found at serine 1181. Copy 3 of the repeat occupies 1225 to 1226 (FG). Composition is skewed to polar residues over residues 1234–1254 (SNFT…QPDA) and 1273–1285 (PPSG…NTTP). Disordered regions lie at residues 1234-1316 (SNFT…PPSK) and 1337-1408 (LRVG…TSST). Residues 1288–1299 (PAASSSRPVAPS) are compositionally biased toward low complexity. Polar residues predominate over residues 1301–1310 (TALSTTSSKL). Threonine 1312 bears the Phosphothreonine mark. Residues 1347 to 1368 (KPTNKASSTSLTSTQPTKTSGV) show a composition bias toward polar residues. Serine 1353 is modified (phosphoserine). A compositionally biased stretch (low complexity) spans 1386-1408 (PPVTSSATTTSVAPPAATSTSST). An 18 X 4 AA approximate repeats region spans residues 1409-2084 (AVFGSLPVTS…FGSNNSSVQG (676 aa)). Repeat copies occupy residues 1411–1412 (FG), 1427–1428 (FG), 1441–1442 (FG), and 1473–1474 (FG). The tract at residues 1427-2085 (FGGTSLSAGK…GSNNSSVQGF (659 aa)) is 11 X 3 AA approximate repeats. A compositionally biased stretch (polar residues) spans 1438–1450 (SFSFGSQQTNSTV). Positions 1438 to 1467 (SFSFGSQQTNSTVPPSAPPPTTAATPLPTS) are disordered. Low complexity-rich tracts occupy residues 1479–1489 (SATTPSLPMSA) and 1508–1527 (SEVS…AQLP). Residues 1479-1539 (SATTPSLPMS…PPQTSDSVKK (61 aa)) are disordered. Lysine 1538 participates in a covalent cross-link: Glycyl lysine isopeptide (Lys-Gly) (interchain with G-Cter in SUMO2). Repeat copies occupy residues 1635–1636 (FG), 1674–1675 (FG), 1686–1687 (FG), 1713–1714 (FG), 1721–1722 (FG), 1726–1727 (FG), 1732–1733 (FG), 1756–1757 (FG), 1772–1773 (FG), 1786–1787 (FG), 1798–1799 (FG), 1806–1807 (FG), 1812–1813 (FG), 1819–1820 (FG), 1842–1843 (FG), 1851–1852 (FG), 1862–1863 (FG), and 1874–1875 (FG). A disordered region spans residues 1884–1903 (GFFSGLGGKPSQDAANKNPF). 5 repeat units span residues 1910-1911 (FG), 1922-1923 (FG), 1930-1931 (FG), 1938-1939 (FG), and 1959-1960 (FG). Serine 1963 carries the phosphoserine modification. 3 tandem repeats follow at residues 1970–1971 (FG), 1976–1977 (FG), and 1982–1983 (FG). The residue at position 1985 (serine 1985) is a Phosphoserine. A run of 11 repeats spans residues 1988–1989 (FG), 1994–1995 (FG), 2012–2013 (FG), 2024–2025 (FG), 2026–2027 (FG), 2035–2036 (FG), 2046–2047 (FG), 2056–2057 (FG), 2066–2067 (FG), 2075–2076 (FG), and 2085–2086 (FG).

In terms of assembly, homodimer. Part of the nuclear pore complex (NPC). Interacts with NUP88. Interacts with ZFP36; this interaction increases upon lipopolysaccharide (LPS) stimulation. Interacts with DDX19. Interacts with XPO1. Interacts with XPO5. (Microbial infection) Interacts with human herpes virus 1 (HHV-1) protein UL25; this interaction might be essential to the capsid docking onto the host nuclear pore. As to quaternary structure, (Microbial infection) Interacts (via N-terminus) with human adenovirus 5 (HAdV-5) protein L3 (hexon); this interaction might be essential for the release of the virus genome to the nucleus. In terms of processing, probably glycosylated as it reacts with wheat germ agglutinin (WGA). As to expression, expressed in thymus, spleen, bone marrow, kidney, brain and testis, but hardly in all other tissues or in whole embryos during development.

It localises to the nucleus. The protein localises to the nuclear pore complex. Its function is as follows. Part of the nuclear pore complex. Has a critical role in nucleocytoplasmic transport. May serve as a docking site in the receptor-mediated import of substrates across the nuclear pore complex. Functionally, (Microbial infection) Required for capsid disassembly of the human adenovirus 5 (HadV-5) leading to release of the viral genome to the nucleus (in vitro). This chain is Nuclear pore complex protein Nup214 (NUP214), found in Homo sapiens (Human).